The sequence spans 177 residues: Austinoid biosynthesis clusters protein F (177 aa).

Belongs to the trt14 isomerase family. Homodimer.

It participates in secondary metabolite biosynthesis; terpenoid biosynthesis. Functionally, part of the gene cluster B that mediates the biosynthesis of austinol and dehydroaustinol, two fungal meroterpenoids. The first step of the pathway is the synthesis of 3,5-dimethylorsellinic acid by the polyketide synthase ausA. 3,5-dimethylorsellinic acid is then prenylated by the polyprenyl transferase ausN. Further epoxidation by the FAD-dependent monooxygenase ausM and cyclization by the probable terpene cyclase ausL lead to the formation of protoaustinoid A. Protoaustinoid A is then oxidized to spiro-lactone preaustinoid A3 by the combined action of the FAD-binding monooxygenases ausB and ausC, and the dioxygenase ausE. Acid-catalyzed keto-rearrangement and ring contraction of the tetraketide portion of preaustinoid A3 by ausJ lead to the formation of preaustinoid A4. The aldo-keto reductase ausK, with the help of ausH, is involved in the next step by transforming preaustinoid A4 into isoaustinone which is in turn hydroxylated by the P450 monooxygenase ausI to form austinolide. Finally, the cytochrome P450 monooxygenase ausG modifies austinolide to austinol. Austinol can be further modified to dehydroaustinol which forms a diffusible complex with diorcinol that initiates conidiation. Due to genetic rearrangements of the clusters and the subsequent loss of some enzymes, the end products of the Emericella nidulans austinoid biosynthesis clusters are austinol and dehydroaustinol, even if additional enzymes, such as the O-acetyltransferase ausQ and the cytochrome P450 monooxygenase ausR are still functional. This chain is Austinoid biosynthesis clusters protein F, found in Emericella nidulans (strain FGSC A4 / ATCC 38163 / CBS 112.46 / NRRL 194 / M139) (Aspergillus nidulans).